The following is a 612-amino-acid chain: Glutamine--fructose-6-phosphate aminotransferase [isomerizing] (612 aa).

The Nucleophile; for GATase activity role is filled by cysteine 2. The 218-residue stretch at 2-219 (CGIVGANSTR…EGDIAIISKD (218 aa)) folds into the Glutamine amidotransferase type-2 domain. 2 SIS domains span residues 287–427 (AKEL…LKNS) and 460–602 (ISEY…VDQP). Lysine 607 (for Fru-6P isomerization activity) is an active-site residue.

In terms of assembly, homodimer.

It localises to the cytoplasm. It catalyses the reaction D-fructose 6-phosphate + L-glutamine = D-glucosamine 6-phosphate + L-glutamate. Catalyzes the first step in hexosamine metabolism, converting fructose-6P into glucosamine-6P using glutamine as a nitrogen source. The polypeptide is Glutamine--fructose-6-phosphate aminotransferase [isomerizing] (Francisella tularensis subsp. tularensis (strain SCHU S4 / Schu 4)).